The primary structure comprises 314 residues: MITRLKNWPCLLKRFSIQQIHQFTHLSGRFERAPQSSKSPRDPYLVTVVQGRSKKPRFPGERSNQRFGEDSWFVNSTPLAEVMGVADGVGGWRDLGVDAGRFAKELMSCCSGQTQLSDFDGRSPRNLLIAGFQELSHREQPVVGSSTACLATMHRKDCTLYTANLGDSGFLVVRNGRVLHRSVEQTHDFNTPYQLTVPPEDRKESYYCDKPEMAVSSRHSLLPGDLVLLATDGLFDNMPESMLLSILNGLKERGERDLLEGASRVVEKARELSLNASFQSPFAIKARQHNVSYSGGGKPDDITLILSSVEVPSV.

Residues 43 to 309 (PYLVTVVQGR…DDITLILSSV (267 aa)) enclose the PPM-type phosphatase domain. Mn(2+) is bound by residues aspartate 87, glycine 88, and aspartate 232.

The protein belongs to the PP2C family. Mg(2+) serves as cofactor. It depends on Mn(2+) as a cofactor.

It carries out the reaction O-phospho-L-seryl-[protein] + H2O = L-seryl-[protein] + phosphate. The enzyme catalyses O-phospho-L-threonyl-[protein] + H2O = L-threonyl-[protein] + phosphate. The protein is Protein phosphatase PTC7 homolog fig of Drosophila sechellia (Fruit fly).